A 187-amino-acid polypeptide reads, in one-letter code: MEMMIKKRIKQVKKGDQDAFADIVDIYKDKIYQLCYRMLGNVHEAEDIAQEAFIRAYVNIDSFDINRKFSTWLYRIATNLTIDRIRKKKPDYYLDAEVAGTEGLTMYSQIVADGVLPEDAVVSLELSNTIQQKILKLPDKYRTVIVLKYIDELSLIEIGEILNIPVGTVKTRIHRGREALRKQLRDL.

The segment at 3 to 95 is sigma-70 factor domain-2; the sequence is MMIKKRIKQV…RKKKPDYYLD (93 aa). Positions 47–50 match the Polymerase core binding motif; the sequence is DIAQ. The interval 125–187 is sigma-70 factor domain-4; it reads ELSNTIQQKI…EALRKQLRDL (63 aa). The H-T-H motif DNA-binding region spans 166-184; it reads VGTVKTRIHRGREALRKQL.

The protein belongs to the sigma-70 factor family. ECF subfamily. Interacts transiently with the RNA polymerase catalytic core formed by RpoA, RpoB, RpoC and RpoZ (2 alpha, 1 beta, 1 beta' and 1 omega subunit) to form the RNA polymerase holoenzyme that can initiate transcription. Forms a heterodimer with cognate anti-sigma factor RsiW, which prevents it from binding to the -10 and -35 promoter elements.

Its activity is regulated as follows. Extracytoplasmic function (ECF) sigma factors are held in an inactive form by a cognate anti-sigma factor (RsiW for this protein) until released by regulated membrane proteolysis (RIP). RIP occurs when an extracytoplasmic signal (envelope stress) triggers a concerted proteolytic cascade to transmit information and elicit cellular responses. The anti-sigma factor RsiW is a membrane protein, binding sigma-W in the cytoplasm. RsiW is first cut extracytoplasmically (site-1 protease, S1P, by PrsW), then within the membrane itself (site-2 protease, S2P, by RasP), while cytoplasmic proteases (predominantly ClpX-ClpP) finish degrading the regulatory protein, liberating sigma-W. Sigma factors are initiation factors that promote the attachment of RNA polymerase (RNAP) to specific initiation sites and are then released. Sigma-W controls genes involved in response to cell envelope stress such as antimicrobial peptides, alkaline pH, transport processes and detoxification. The protein is ECF RNA polymerase sigma factor SigW (sigW) of Bacillus subtilis (strain 168).